The chain runs to 541 residues: 2-succinyl-5-enolpyruvyl-6-hydroxy-3-cyclohexene-1-carboxylate synthase (541 aa).

The protein belongs to the TPP enzyme family. MenD subfamily. In terms of assembly, homodimer. Requires Mg(2+) as cofactor. It depends on Mn(2+) as a cofactor. The cofactor is thiamine diphosphate.

The catalysed reaction is isochorismate + 2-oxoglutarate + H(+) = 5-enolpyruvoyl-6-hydroxy-2-succinyl-cyclohex-3-ene-1-carboxylate + CO2. The protein operates within quinol/quinone metabolism; 1,4-dihydroxy-2-naphthoate biosynthesis; 1,4-dihydroxy-2-naphthoate from chorismate: step 2/7. Its pathway is quinol/quinone metabolism; menaquinone biosynthesis. Catalyzes the thiamine diphosphate-dependent decarboxylation of 2-oxoglutarate and the subsequent addition of the resulting succinic semialdehyde-thiamine pyrophosphate anion to isochorismate to yield 2-succinyl-5-enolpyruvyl-6-hydroxy-3-cyclohexene-1-carboxylate (SEPHCHC). This Leuconostoc citreum (strain KM20) protein is 2-succinyl-5-enolpyruvyl-6-hydroxy-3-cyclohexene-1-carboxylate synthase.